The chain runs to 875 residues: Probable ATP-dependent RNA helicase DDX10 (875 aa).

The tract at residues 1 to 43 (MGKTANSPGSGARPDPVRSFNRWKKKHSHRQNKKKQLRKQLKK) is disordered. The residue at position 4 (T4) is a Phosphothreonine. The residue at position 7 (S7) is a Phosphoserine. A compositionally biased stretch (basic residues) spans 21-41 (NRWKKKHSHRQNKKKQLRKQL). The short motif at 69-97 (TRFSDFPLSKKTLKGLQEAQYRLVTEIQK) is the Q motif element. ATP is bound by residues 89 to 91 (YRL), Q96, and 113 to 120 (AKTGSGKT). A Helicase ATP-binding domain is found at 100–274 (IGLALQGKDV…RLSLKNPEYV (175 aa)). The DEAD box signature appears at 222-225 (DEAD). One can recognise a Helicase C-terminal domain in the interval 287–448 (TLEQNYIVCE…EIKINPEKLI (162 aa)). S539 bears the Phosphoserine mark. K555 bears the N6-acetyllysine mark. The disordered stretch occupies residues 562–631 (GGKRLEGTEH…QFLDRDEEEE (70 aa)). Over residues 564 to 575 (KRLEGTEHRQDN) the composition is skewed to basic and acidic residues. T577 carries the phosphothreonine modification. A compositionally biased stretch (acidic residues) spans 577–593 (TGNEEQEEEEDDEEEME). The span at 603-613 (QAPSLPNTSEA) shows a compositional bias: polar residues. Residue K649 forms a Glycyl lysine isopeptide (Lys-Gly) (interchain with G-Cter in SUMO2) linkage. A disordered region spans residues 703–850 (MQKSAIKDAE…HNRKKARWDT (148 aa)). Residues 727–741 (ERLQEEDKFDKEEYR) show a composition bias toward basic and acidic residues. A compositionally biased stretch (basic residues) spans 742–751 (KKIKAKHREK). The span at 752 to 771 (RLKEREARREANKRQAKAKD) shows a compositional bias: basic and acidic residues. Residues 772-790 (EEEAFLDWSDDDDDDDDGF) are compositionally biased toward acidic residues. S780 bears the Phosphoserine mark. Positions 812 to 821 (MENKISDTKK) are enriched in basic and acidic residues. The residue at position 831 (S831) is a Phosphoserine.

This sequence belongs to the DEAD box helicase family. DDX10/DBP4 subfamily. As to quaternary structure, interacts with AIM2; this interaction promotes AIM2 stability. Interacts with SCNA; this interaction causes DDX10 mislocalization to the nucleoplasm and cytoplasmic inclusions. As to expression, high in testis but widely expressed.

Its subcellular location is the cytoplasm. It localises to the nucleus. The protein localises to the nucleolus. It carries out the reaction ATP + H2O = ADP + phosphate + H(+). Functionally, putative ATP-dependent RNA helicase that plays various role in innate immunity or inflammation. Plays a role in the enhancement of AIM2-induced inflammasome activation by interacting with AIM2 and stabilizing its protein level. Negatively regulates viral infection by promoting interferon beta production and interferon stimulated genes/ISGs expression. This Homo sapiens (Human) protein is Probable ATP-dependent RNA helicase DDX10 (DDX10).